Consider the following 119-residue polypeptide: Circadian clock oscillator protein KaiB (119 aa).

It belongs to the KaiB family. In terms of assembly, the KaiABC complex composition changes during the circadian cycle to control KaiC phosphorylation. Complexes KaiC(6), KaiA(2-4):KaiC(6), KaiB(6):KaiC(6) and KaiC(6):KaiB(6):KaiA(12) are among the most important forms, many form cooperatively. Undergoes a major conformational rearrangment; in the free state forms homotetramers as a dimer of dimers. When bound to the CI domain of KaiC switches to a monomeric thioredoxin-fold (KaiB(fs)). KaiB(fs) binds CikA, leading it to dephosphorylate phospho-RpaA.

Its function is as follows. Key component of the KaiABC oscillator complex, which constitutes the main circadian regulator in cyanobacteria. Complex composition changes during the circadian cycle to control KaiC phosphorylation. KaiA stimulates KaiC autophosphorylation, while KaiB sequesters KaiA, leading to KaiC autodephosphorylation. Phospho-Ser-431 KaiC accumulation triggers binding of KaiB to form the KaiB(6):KaiC(6) complex, leading to changes in output regulators CikA and SasA. KaiB switches to a thioredoxin-like fold (KaiB(fs)) when bound to KaiC. KaiB(6):KaiC(6) formation exposes a site for KaiA binding that sequesters KaiA from KaiC, making the KaiC(6):KaiB(6):KaiA(12) complex that results in KaiC autodephosphorylation. Functionally, a metamorphic protein which reversibly switches between an inactive tetrameric fold and a rare, thioredoxin-like monomeric fold (KaiB(fs)). KaiB(fs) binds phospho-KaiC, KaiA and CikA. KaiA and CikA compete for binding to KaiB(fs), and KaiB(fs) and SasA compete for binding to KaiC, thus the clock oscillator and output signal pathway are tightly coupled. This chain is Circadian clock oscillator protein KaiB, found in Synechococcus sp. (strain CC9311).